The sequence spans 331 residues: tRNA uridine(34) hydroxylase (331 aa).

The Rhodanese domain occupies 123–217; sequence TDPEVLLIDT…YLEDVPQEES (95 aa). Catalysis depends on Cys177, which acts as the Cysteine persulfide intermediate. The tract at residues 293–331 is disordered; the sequence is KSRGEEHIGSEAAKAIKKRQAEKKLKRKNYHQHLTQGAE. Over residues 307 to 323 the composition is skewed to basic residues; sequence AIKKRQAEKKLKRKNYH.

The protein belongs to the TrhO family.

It carries out the reaction uridine(34) in tRNA + AH2 + O2 = 5-hydroxyuridine(34) in tRNA + A + H2O. Functionally, catalyzes oxygen-dependent 5-hydroxyuridine (ho5U) modification at position 34 in tRNAs. The polypeptide is tRNA uridine(34) hydroxylase (Hahella chejuensis (strain KCTC 2396)).